Reading from the N-terminus, the 329-residue chain is Ketol-acid reductoisomerase (NADP(+)) (329 aa).

The region spanning 2 to 182 (TQLFYDTDAD…GGTRAGILET (181 aa)) is the KARI N-terminal Rossmann domain. NADP(+)-binding positions include 25-28 (YGSQ), Ser-51, Ser-53, and 83-86 (DEFQ). The active site involves His-108. Gly-134 provides a ligand contact to NADP(+). One can recognise a KARI C-terminal knotted domain in the interval 183–328 (NFKEETETDL…KGLRSMFSWL (146 aa)). Residues Asp-191, Glu-195, Glu-227, and Glu-231 each contribute to the Mg(2+) site. Ser-252 lines the substrate pocket.

The protein belongs to the ketol-acid reductoisomerase family. It depends on Mg(2+) as a cofactor.

The catalysed reaction is (2R)-2,3-dihydroxy-3-methylbutanoate + NADP(+) = (2S)-2-acetolactate + NADPH + H(+). It catalyses the reaction (2R,3R)-2,3-dihydroxy-3-methylpentanoate + NADP(+) = (S)-2-ethyl-2-hydroxy-3-oxobutanoate + NADPH + H(+). It functions in the pathway amino-acid biosynthesis; L-isoleucine biosynthesis; L-isoleucine from 2-oxobutanoate: step 2/4. The protein operates within amino-acid biosynthesis; L-valine biosynthesis; L-valine from pyruvate: step 2/4. Its function is as follows. Involved in the biosynthesis of branched-chain amino acids (BCAA). Catalyzes an alkyl-migration followed by a ketol-acid reduction of (S)-2-acetolactate (S2AL) to yield (R)-2,3-dihydroxy-isovalerate. In the isomerase reaction, S2AL is rearranged via a Mg-dependent methyl migration to produce 3-hydroxy-3-methyl-2-ketobutyrate (HMKB). In the reductase reaction, this 2-ketoacid undergoes a metal-dependent reduction by NADPH to yield (R)-2,3-dihydroxy-isovalerate. This is Ketol-acid reductoisomerase (NADP(+)) from Prochlorococcus marinus (strain MIT 9215).